Here is a 359-residue protein sequence, read N- to C-terminus: GTP cyclohydrolase FolE2 (359 aa).

It belongs to the GTP cyclohydrolase IV family.

The enzyme catalyses GTP + H2O = 7,8-dihydroneopterin 3'-triphosphate + formate + H(+). It participates in cofactor biosynthesis; 7,8-dihydroneopterin triphosphate biosynthesis; 7,8-dihydroneopterin triphosphate from GTP: step 1/1. In terms of biological role, converts GTP to 7,8-dihydroneopterin triphosphate. The polypeptide is GTP cyclohydrolase FolE2 (Cereibacter sphaeroides (strain ATCC 17025 / ATH 2.4.3) (Rhodobacter sphaeroides)).